A 223-amino-acid chain; its full sequence is UPF0502 protein Sde_2426 (223 aa).

It belongs to the UPF0502 family.

In Saccharophagus degradans (strain 2-40 / ATCC 43961 / DSM 17024), this protein is UPF0502 protein Sde_2426.